The sequence spans 1036 residues: MASSVGNVADSTGLAELAHREYQAGDFEAAERHCMQLWRQEPDNTGVLLLLSSIHFQCRRLDRSAHFSTLAIKQNPLLAEAYSNLGNVYKERGQLQEAIEHYRHALRLKPDFIDGYINLAAALVAAGDMEGAVQAYVSALQYNPDLYCVRSDLGNLLKALGRLEEAKACYLKAIETQPNFAVAWSNLGCVFNAQGEIWLAIHHFEKAVTLDPNFLDAYINLGNVLKEARIFDRAVAAYLRALSLSPNHAVVHGNLACVYYEQGLIDLAIDTYRRAIELQPHFPDAYCNLANALKEKGSVAEAEDCYNTALRLCPTHADSLNNLANIKREQGNIEEAVRLYRKALEVFPEFAAAHSNLASVLQQQGKLQEALMHYKEAIRISPTFADAYSNMGNTLKEMQDVQGALQCYTRAIQINPAFADAHSNLASIHKDSGNIPEAIASYRTALKLKPDFPDAYCNLAHCLQIVCDWTDYDERMKKLVSIVAEQLEKNRLPSVHPHHSMLYPLSHGFRKAIAERHGNLCLDKINVLHKPPYEHPKDLKLSDGRLRVGYVSSDFGNHPTSHLMQSIPGMHNPDKFEVFCYALSPDDGTNFRVKVMAEANHFIDLSQIPCNGKAADRIHQDGIHILVNMNGYTKGARNELFALRPAPIQAMWLGYPGTSGALFMDYIITDQETSPAEVAEQYSEKLAYMPHTFFIGDHANMFPHLKKKAVIDFKSNGHIYDNRIVLNGIDLKAFLDSLPDVKIVKMKCPDGGDNADTTNTALNMPVIPMNTIAEAVIEMINRGQIQITINGFSISNGLATTQINNKAATGEEVPRTIIVTTRSQYGLPEDAIVYCNFNQLYKIDPSTLQMGANILKRVPNSVLWLLRFPAVGEPNIQQYAQNMGLPQNRIIFSPVAPKEEHVRRGQLADVCLDTPLCNGHTTGMDVLWAGTPMVTMPGETLASRVAASQLTCLGCLELIAKSRQEYEDIAVKLGTDLEYLKKIRGKVWKQRISSPLFNTKQYTMELERLYLQMWEHYAAGNKPDHMIKPVEVTESA.

N-acetylalanine is present on A2. Phosphoserine; by GSK3-beta; alternate is present on residues S3 and S4. S3 and S4 each carry an O-linked (GlcNAc) serine; alternate glycan. TPR repeat units follow at residues 11–44, 79–112, 113–146, 147–180, 181–214, 215–248, 249–282, 283–316, 317–350, 351–384, 385–418, and 419–452; these read STGLAELAHREYQAGDFEAAERHCMQLWRQEPDN, AEAYSNLGNVYKERGQLQEAIEHYRHALRLKPDF, IDGYINLAAALVAAGDMEGAVQAYVSALQYNPDL, YCVRSDLGNLLKALGRLEEAKACYLKAIETQPNF, AVAWSNLGCVFNAQGEIWLAIHHFEKAVTLDPNF, LDAYINLGNVLKEARIFDRAVAAYLRALSLSPNH, AVVHGNLACVYYEQGLIDLAIDTYRRAIELQPHF, PDAYCNLANALKEKGSVAEAEDCYNTALRLCPTH, ADSLNNLANIKREQGNIEEAVRLYRKALEVFPEF, AAAHSNLASVLQQQGKLQEALMHYKEAIRISPTF, ADAYSNMGNTLKEMQDVQGALQCYTRAIQINPAF, and ADAHSNLASIHKDSGNIPEAIASYRTALKLKPDF. S389 is a glycosylation site (O-linked (GlcNAc) serine; by autocatalysis). Residue T444 is modified to Phosphothreonine. One copy of the TPR 13; truncated repeat lies at 453–463; that stretch reads PDAYCNLAHCL. Positions 454-456 match the DFP motif motif; that stretch reads DAY. Residues 478 to 493 carry the Nuclear localization signal motif; sequence KLVSIVAEQLEKNRLP. H498 serves as the catalytic Proton acceptor. Residues Q839, K842, 896 to 898, 901 to 904, 920 to 922, and D925 contribute to the UDP site; these read APK, HVRR, and HTT. Phosphotyrosine is present on Y979. The interval 981–1000 is required for phosphatidylinositol 3,4,5-triphosphate binding; it reads KKIRGKVWKQRISSPLFNTK.

It belongs to the glycosyltransferase 41 family. O-GlcNAc transferase subfamily. In terms of assembly, monomer; may exist in different oligomerization states in cells. Homotrimer, oligomerizes via TPR repeats 6 and 7. Trimerization is not necessary for activity in vitro, however it increases affinity for UDP-GlcNAc. A heterotrimer consisting of two 110 kDa subunits and one highly related 78 kDa subunit is isolated from liver. Component of a THAP1/THAP3-HCFC1-OGT complex. Component of the NSL complex at least composed of MOF/KAT8, KANSL1, KANSL2, KANSL3, MCRS1, PHF20, OGT1/OGT, WDR5 and HCFC1. Found in a complex with KIF5B, RHOT1, RHOT2 and TRAK1. Found in a complex composed of at least SINHCAF, SIN3A, HDAC1, SAP30, RBBP4, OGT and TET1. Component of a complex composed of KMT2E/MLL5, OGT and USP7; the complex stabilizes KMT2E/MLL5, preventing KMT2E/MLL5 ubiquitination and proteasomal-mediated degradation. Interacts (via TPRs 1-6) with SIN3A; the interaction mediates transcriptional repression in parallel with histone deacetylase. Interacts (via TPR 5-6) with TET1, TET2 and TET3. Interacts (via TPR repeats 6 and 7) with ATXN10. Interacts with NSD2. Interacts with PROSER1; this interaction mediates TET2 O-GlcNAcylation and stability by promoting the interaction between OGT and TET2. In terms of processing, several different immunologically-related forms of this protein are found in different tissues (with apparent molecular weights of 110, 80 and 78 kDa); they are probably the result of alternative splicing and/or proteolysis. O-glycosylated; contains O-GlcNAc. Both p110 and p78 forms are O-glycosylated. Post-translationally, ubiquitinated by the SCF(FBXO31) complex, leading to its proteasomal degradation. In terms of processing, phosphorylation on Ser-3 or Ser-4 by GSK3-beta positively regulates its activity. Phosphorylation at Thr-444 by AMPK promotes nuclear localization. Glycosylated via autocatalysis; O-GlcNAcylation at Ser-389 promotes nuclear localization. As to expression, expressed in brain, heart, liver, thymus, muscle, lung, spleen, uterus and ovary; in the kidney only an immunologically-related 78 kDa band is present, which is also present in liver and muscle. In the pancreas, expressed in both exocrine acinar cells and in endocrine cells of the islets of Langerhans.

The protein resides in the cytoplasm. It localises to the nucleus. The protein localises to the cell membrane. It is found in the mitochondrion membrane. Its subcellular location is the cell projection. It carries out the reaction L-seryl-[protein] + UDP-N-acetyl-alpha-D-glucosamine = 3-O-(N-acetyl-beta-D-glucosaminyl)-L-seryl-[protein] + UDP + H(+). It catalyses the reaction L-threonyl-[protein] + UDP-N-acetyl-alpha-D-glucosamine = 3-O-(N-acetyl-beta-D-glucosaminyl)-L-threonyl-[protein] + UDP + H(+). Its pathway is protein modification; protein glycosylation. Inhibited by UDP, UTP and UDP-GlcNAc; 50 mM NaCl or KCl inhibit activity about 70%. In terms of biological role, catalyzes the transfer of a single N-acetylglucosamine from UDP-GlcNAc to a serine or threonine residue in cytoplasmic and nuclear proteins resulting in their modification with a beta-linked N-acetylglucosamine (O-GlcNAc). Glycosylates a large and diverse number of proteins including histone H2B, AKT1, AMPK, ATG4B, CAPRIN1, EZH2, FNIP1, GSDMD, KRT7, LMNA, LMNB1, LMNB2, RPTOR, HOXA1, PFKL, KMT2E/MLL5, MAPT/TAU, TET2, RBL2, RET, NOD2 and HCFC1. Can regulate their cellular processes via cross-talk between glycosylation and phosphorylation or by affecting proteolytic processing. Involved in insulin resistance in muscle and adipocyte cells via glycosylating insulin signaling components and inhibiting the 'Thr-308' phosphorylation of AKT1, enhancing IRS1 phosphorylation and attenuating insulin signaling. Involved in glycolysis regulation by mediating glycosylation of 6-phosphofructokinase PFKL, inhibiting its activity. Plays a key role in chromatin structure by mediating O-GlcNAcylation of 'Ser-112' of histone H2B: recruited to CpG-rich transcription start sites of active genes via its interaction with TET proteins (TET1, TET2 or TET3). As part of the NSL complex indirectly involved in acetylation of nucleosomal histone H4 on several lysine residues. O-GlcNAcylation of 'Ser-75' of EZH2 increases its stability, and facilitating the formation of H3K27me3 by the PRC2/EED-EZH2 complex. Stabilizes KMT2E/MLL5 by mediating its glycosylation, thereby preventing KMT2E/MLL5 ubiquitination. Regulates circadian oscillation of the clock genes and glucose homeostasis in the liver. Stabilizes clock proteins BMAL1 and CLOCK through O-glycosylation, which prevents their ubiquitination and subsequent degradation. Promotes the CLOCK-BMAL1-mediated transcription of genes in the negative loop of the circadian clock such as PER1/2 and CRY1/2. O-glycosylates HCFC1 and regulates its proteolytic processing and transcriptional activity. Component of a THAP1/THAP3-HCFC1-OGT complex that is required for the regulation of the transcriptional activity of RRM1. Regulates mitochondrial motility in neurons by mediating glycosylation of TRAK1. Promotes autophagy by mediating O-glycosylation of ATG4B. Acts as a regulator of mTORC1 signaling by mediating O-glycosylation of RPTOR and FNIP1: O-GlcNAcylation of RPTOR in response to glucose sufficiency promotes activation of the mTORC1 complex. The polypeptide is UDP-N-acetylglucosamine--peptide N-acetylglucosaminyltransferase 110 kDa subunit (Ogt) (Rattus norvegicus (Rat)).